The sequence spans 164 residues: Cytochrome c-type biogenesis protein CcmE (164 aa).

Residues 1-7 (MTRKQRR) are Cytoplasmic-facing. A helical; Signal-anchor for type II membrane protein transmembrane segment spans residues 8-28 (LLMIGGAGVVLVVAVGLVLNA). Residues 29–164 (MRGSIVFFST…ASADAAGPSR (136 aa)) lie on the Periplasmic side of the membrane. Heme contacts are provided by His122 and Tyr126. Residues 137 to 149 (KQGHWKDDYEKKP) show a composition bias toward basic and acidic residues. Residues 137–164 (KQGHWKDDYEKKPPGAPGASADAAGPSR) are disordered. The span at 153–164 (PGASADAAGPSR) shows a compositional bias: low complexity.

This sequence belongs to the CcmE/CycJ family.

The protein resides in the cell inner membrane. Functionally, heme chaperone required for the biogenesis of c-type cytochromes. Transiently binds heme delivered by CcmC and transfers the heme to apo-cytochromes in a process facilitated by CcmF and CcmH. This is Cytochrome c-type biogenesis protein CcmE from Rhodopseudomonas palustris (strain BisB5).